Consider the following 84-residue polypeptide: Acyl carrier protein (84 aa).

The 75-residue stretch at 1–75 folds into the Carrier domain; it reads MIFQKIQEFI…DILEYIQQHV (75 aa). Ser-35 is modified (O-(pantetheine 4'-phosphoryl)serine).

It belongs to the acyl carrier protein (ACP) family. In terms of processing, 4'-phosphopantetheine is transferred from CoA to a specific serine of apo-ACP by AcpS. This modification is essential for activity because fatty acids are bound in thioester linkage to the sulfhydryl of the prosthetic group.

The protein resides in the cytoplasm. It participates in lipid metabolism; fatty acid biosynthesis. Its function is as follows. Carrier of the growing fatty acid chain in fatty acid biosynthesis. This Phytoplasma mali (strain AT) protein is Acyl carrier protein.